The primary structure comprises 130 residues: Small ribosomal subunit protein uS9 (130 aa).

The disordered stretch occupies residues 111–130 (VERKKPGLKKARKASQFSKR). The span at 116–130 (PGLKKARKASQFSKR) shows a compositional bias: basic residues.

This sequence belongs to the universal ribosomal protein uS9 family.

This is Small ribosomal subunit protein uS9 from Lactococcus lactis subsp. lactis (strain IL1403) (Streptococcus lactis).